We begin with the raw amino-acid sequence, 753 residues long: 5-methyltetrahydropteroyltriglutamate--homocysteine methyltransferase (753 aa).

5-methyltetrahydropteroyltri-L-glutamate is bound by residues 17-20 (RELK) and lysine 117. L-homocysteine-binding positions include 431–433 (IGS) and glutamate 484. L-methionine is bound by residues 431–433 (IGS) and glutamate 484. 5-methyltetrahydropteroyltri-L-glutamate contacts are provided by residues 515–516 (RC) and tryptophan 561. Aspartate 599 provides a ligand contact to L-homocysteine. Aspartate 599 is an L-methionine binding site. Residue glutamate 605 coordinates 5-methyltetrahydropteroyltri-L-glutamate. Zn(2+) is bound by residues histidine 641, cysteine 643, and glutamate 665. Histidine 694 functions as the Proton donor in the catalytic mechanism. Cysteine 726 is a Zn(2+) binding site.

Belongs to the vitamin-B12 independent methionine synthase family. The cofactor is Zn(2+).

It carries out the reaction 5-methyltetrahydropteroyltri-L-glutamate + L-homocysteine = tetrahydropteroyltri-L-glutamate + L-methionine. It participates in amino-acid biosynthesis; L-methionine biosynthesis via de novo pathway; L-methionine from L-homocysteine (MetE route): step 1/1. Catalyzes the transfer of a methyl group from 5-methyltetrahydrofolate to homocysteine resulting in methionine formation. This Cronobacter sakazakii (strain ATCC BAA-894) (Enterobacter sakazakii) protein is 5-methyltetrahydropteroyltriglutamate--homocysteine methyltransferase.